Here is a 286-residue protein sequence, read N- to C-terminus: Acetylglutamate kinase (286 aa).

Substrate contacts are provided by residues 69 to 70 (GG), Arg91, and Asn185.

Belongs to the acetylglutamate kinase family. ArgB subfamily.

The protein localises to the cytoplasm. The catalysed reaction is N-acetyl-L-glutamate + ATP = N-acetyl-L-glutamyl 5-phosphate + ADP. It functions in the pathway amino-acid biosynthesis; L-arginine biosynthesis; N(2)-acetyl-L-ornithine from L-glutamate: step 2/4. Its function is as follows. Catalyzes the ATP-dependent phosphorylation of N-acetyl-L-glutamate. This chain is Acetylglutamate kinase, found in Chlorobium chlorochromatii (strain CaD3).